Here is a 124-residue protein sequence, read N- to C-terminus: Prefoldin subunit beta (124 aa).

Belongs to the prefoldin subunit beta family. In terms of assembly, heterohexamer of two alpha and four beta subunits.

The protein localises to the cytoplasm. Its function is as follows. Molecular chaperone capable of stabilizing a range of proteins. Seems to fulfill an ATP-independent, HSP70-like function in archaeal de novo protein folding. This chain is Prefoldin subunit beta, found in Pyrobaculum arsenaticum (strain DSM 13514 / JCM 11321 / PZ6).